Reading from the N-terminus, the 1234-residue chain is Complement factor H (1234 aa).

An N-terminal signal peptide occupies residues 1–18; the sequence is MRLSARIIWLILWTVCAA. Sushi domains are found at residues 19–82, 83–143, 144–207, 208–264, 265–322, 324–386, 387–444, 446–507, 508–566, 567–624, 627–685, 688–745, 750–804, 806–863, 865–933, 934–991, 992–1050, 1051–1109, 1112–1170, and 1171–1234; these read EDCK…ICRK, KPCG…LCEV, VKCL…RCVE, ILCT…FCEE, KRCS…RCTL, PCEF…VPCV, RKCV…KCIR, KTCS…SCIK, SCDM…SCYE, RECS…TCKG, ASCA…VCIE, RTCG…KCVA, EKCR…NCTS, TSCP…RCIE, IPCS…RCVG, LPCG…KCIK, TDCD…VCKD, NSCV…KCRD, GKCG…TCLH, and ACVI…PTCV. Intrachain disulfides connect Cys-21–Cys-66, Cys-52–Cys-80, Cys-85–Cys-129, Cys-114–Cys-141, Cys-146–Cys-192, Cys-178–Cys-205, Cys-210–Cys-251, Cys-237–Cys-262, Cys-267–Cys-309, Cys-294–Cys-320, Cys-325–Cys-374, Cys-357–Cys-385, Cys-389–Cys-431, Cys-416–Cys-442, Cys-448–Cys-494, Cys-477–Cys-505, Cys-509–Cys-553, Cys-536–Cys-564, Cys-569–Cys-610, Cys-597–Cys-622, Cys-629–Cys-672, Cys-658–Cys-683, Cys-690–Cys-732, Cys-718–Cys-743, Cys-752–Cys-791, Cys-780–Cys-802, Cys-808–Cys-850, Cys-836–Cys-861, Cys-867–Cys-920, Cys-906–Cys-931, Cys-936–Cys-978, Cys-964–Cys-989, Cys-994–Cys-1037, Cys-1023–Cys-1048, Cys-1053–Cys-1096, Cys-1082–Cys-1107, Cys-1114–Cys-1157, Cys-1143–Cys-1168, Cys-1172–Cys-1223, and Cys-1206–Cys-1233. 4 N-linked (GlcNAc...) asparagine glycosylation sites follow: Asn-676, Asn-721, Asn-773, and Asn-801. Residues 872 to 896 form a disordered region; that stretch reads TIEHGSINLPRSSEERRDSIESSSH. Over residues 883–896 the composition is skewed to basic and acidic residues; that stretch reads SSEERRDSIESSSH. Residues Asn-1030 and Asn-1061 are each glycosylated (N-linked (GlcNAc...) asparagine). A Phosphoserine modification is found at Ser-1198. N-linked (GlcNAc...) asparagine glycosylation occurs at Asn-1225.

Homodimer. Also forms homooligomers. Interacts with complement protein C3b; this interaction inhibits complement activation. Interacts with complement protein C3d. Interacts with CR3/ITGAM; this interaction mediates adhesion of neutrophils to pathogens leading to pathogen clearance. Post-translationally, sulfated on tyrosine residues. As to expression, CFH is one of the most abundant complement components in blood where the liver is the major source of CFH protein in vivo. in addition, CFH is secreted by additional cell types including monocytes, fibroblasts, or endothelial cells.

It localises to the secreted. Its function is as follows. Glycoprotein that plays an essential role in maintaining a well-balanced immune response by modulating complement activation. Acts as a soluble inhibitor of complement, where its binding to self markers such as glycan structures prevents complement activation and amplification on cell surfaces. Accelerates the decay of the complement alternative pathway (AP) C3 convertase C3bBb, thus preventing local formation of more C3b, the central player of the complement amplification loop. As a cofactor of the serine protease factor I, CFH also regulates proteolytic degradation of already-deposited C3b. In addition, mediates several cellular responses through interaction with specific receptors. For example, interacts with CR3/ITGAM receptor and thereby mediates the adhesion of human neutrophils to different pathogens. In turn, these pathogens are phagocytosed and destroyed. This chain is Complement factor H (Cfh), found in Mus musculus (Mouse).